Here is a 152-residue protein sequence, read N- to C-terminus: Interleukin-2 (152 aa).

The first 20 residues, 1-20 (MYRMQLLSCIALTLALVANG), serve as a signal peptide directing secretion. Residue threonine 23 is glycosylated (O-linked (GalNAc...) threonine). Cysteine 78 and cysteine 126 are joined by a disulfide.

This sequence belongs to the IL-2 family.

The protein resides in the secreted. Cytokine produced by activated CD4-positive helper T-cells and to a lesser extend activated CD8-positive T-cells and natural killer (NK) cells that plays pivotal roles in the immune response and tolerance. Binds to a receptor complex composed of either the high-affinity trimeric IL-2R (IL2RA/CD25, IL2RB/CD122 and IL2RG/CD132) or the low-affinity dimeric IL-2R (IL2RB and IL2RG). Interaction with the receptor leads to oligomerization and conformation changes in the IL-2R subunits resulting in downstream signaling starting with phosphorylation of JAK1 and JAK3. In turn, JAK1 and JAK3 phosphorylate the receptor to form a docking site leading to the phosphorylation of several substrates including STAT5. This process leads to activation of several pathways including STAT, phosphoinositide-3-kinase/PI3K and mitogen-activated protein kinase/MAPK pathways. Functions as a T-cell growth factor and can increase NK-cell cytolytic activity as well. Promotes strong proliferation of activated B-cells and subsequently immunoglobulin production. Plays a pivotal role in regulating the adaptive immune system by controlling the survival and proliferation of regulatory T-cells, which are required for the maintenance of immune tolerance. Moreover, participates in the differentiation and homeostasis of effector T-cell subsets, including Th1, Th2, Th17 as well as memory CD8-positive T-cells. The chain is Interleukin-2 (IL2) from Orcinus orca (Killer whale).